A 467-amino-acid chain; its full sequence is Probable rhamnogalacturonase A (467 aa).

A signal peptide spans M1–A19. An intrachain disulfide couples C40 to C66. The Proton donor role is filled by D217. Residues C219 and C236 are joined by a disulfide bond. N237 and N252 each carry an N-linked (GlcNAc...) asparagine glycan. Residue H292 is part of the active site. A glycan (N-linked (GlcNAc...) asparagine) is linked at N319. Cystine bridges form between C342–C348 and C370–C379.

The protein belongs to the glycosyl hydrolase 28 family.

It localises to the secreted. It catalyses the reaction Endohydrolysis of alpha-D-GalA-(1-&gt;2)-alpha-L-Rha glycosidic bond in the rhamnogalacturonan I backbone with initial inversion of anomeric configuration releasing oligosaccharides with beta-D-GalA at the reducing end.. In terms of biological role, pectinolytic enzymes consist of four classes of enzymes: pectine lyase, polygalacturonase, pectin methylesterase and rhamnogalacturonase. Hydrolyzes alpha-D-galacturonopyranosyl-(1,2)-alpha-L-rhamnopyranosyl linkages in the backbone of the hairy regions of pectins. This is Probable rhamnogalacturonase A (rhgA) from Aspergillus oryzae (strain ATCC 42149 / RIB 40) (Yellow koji mold).